A 395-amino-acid polypeptide reads, in one-letter code: MRKIMYFGGTCQSPALPALIHPPAPPLQPSLDIKPFLPFPLDTAATVNLFPNFNAMDPIQKAVINHTFGFPLPHRKKQIISCNICQLRFNSDSQAAAHYKGTKHAKKLKALESMKNKQKSVTAKDSAKTTFTSITTNPITTSSDKTESTAGTQVIARSADMRKSSEVTTELTSNAEKSLTAAVAAGNNSSPPTETEEEKAKRLLYCSLCKVAVNSASQLEAHNSGTKHKTMLEARNGSGTIKAFPRAGMKGKGPVNKGNTGLQNKTFHCEICDVHVNSETQLKQHISSRRHKDRASGKPPKPKYSPYNKLQKAAHPLGVKLVFSKEPSKPLTPRILPNPLAAAAAAAAVAVNSPFSLRTAPAATLFQTSALPPALLRPAPGPIRTTHTPVLFSPY.

3 Matrin-type zinc fingers span residues 80–110 (ISCNICQLRFNSDSQAAAHYKGTKHAKKLKA), 204–234 (LYCSLCKVAVNSASQLEAHNSGTKHKTMLEA), and 267–297 (FHCEICDVHVNSETQLKQHISSRRHKDRASG). Positions 282–308 (LKQHISSRRHKDRASGKPPKPKYSPYN) are disordered.

It localises to the nucleus. The polypeptide is Zinc finger protein 385D (Znf385d) (Rattus norvegicus (Rat)).